A 185-amino-acid polypeptide reads, in one-letter code: Ribosome-recycling factor (185 aa).

Belongs to the RRF family.

The protein resides in the cytoplasm. Its function is as follows. Responsible for the release of ribosomes from messenger RNA at the termination of protein biosynthesis. May increase the efficiency of translation by recycling ribosomes from one round of translation to another. This Pseudomonas savastanoi pv. phaseolicola (strain 1448A / Race 6) (Pseudomonas syringae pv. phaseolicola (strain 1448A / Race 6)) protein is Ribosome-recycling factor.